Here is a 281-residue protein sequence, read N- to C-terminus: Ribosomal protein L11 methyltransferase (281 aa).

T133, G154, D175, and N216 together coordinate S-adenosyl-L-methionine.

This sequence belongs to the methyltransferase superfamily. PrmA family.

It localises to the cytoplasm. It catalyses the reaction L-lysyl-[protein] + 3 S-adenosyl-L-methionine = N(6),N(6),N(6)-trimethyl-L-lysyl-[protein] + 3 S-adenosyl-L-homocysteine + 3 H(+). Methylates ribosomal protein L11. The polypeptide is Ribosomal protein L11 methyltransferase (Campylobacter jejuni (strain RM1221)).